The primary structure comprises 459 residues: ATP-dependent protease ATPase subunit HslU (459 aa).

ATP contacts are provided by residues V18, 60–65 (GVGKTE), D269, E337, and R409.

Belongs to the ClpX chaperone family. HslU subfamily. In terms of assembly, a double ring-shaped homohexamer of HslV is capped on each side by a ring-shaped HslU homohexamer. The assembly of the HslU/HslV complex is dependent on binding of ATP.

It is found in the cytoplasm. ATPase subunit of a proteasome-like degradation complex; this subunit has chaperone activity. The binding of ATP and its subsequent hydrolysis by HslU are essential for unfolding of protein substrates subsequently hydrolyzed by HslV. HslU recognizes the N-terminal part of its protein substrates and unfolds these before they are guided to HslV for hydrolysis. The protein is ATP-dependent protease ATPase subunit HslU of Myxococcus xanthus (strain DK1622).